We begin with the raw amino-acid sequence, 306 residues long: ClpXP adapter protein SpxH (306 aa).

It belongs to the SpxH family. As to quaternary structure, interacts with Spx.

The protein localises to the cytoplasm. Its function is as follows. Adapter protein required for efficient degradation of Spx by ClpXP under non-stress conditions. Interaction with Spx stabilizes Spx and exposes the C-terminus of Spx for recognition and proteolysis by ClpXP. The polypeptide is ClpXP adapter protein SpxH (Halalkalibacterium halodurans (strain ATCC BAA-125 / DSM 18197 / FERM 7344 / JCM 9153 / C-125) (Bacillus halodurans)).